The sequence spans 781 residues: Catalase-peroxidase (781 aa).

The signal sequence occupies residues 1 to 20; it reads MLYIYYLFKSLFFHTLFVFS. The tryptophyl-tyrosyl-methioninium (Trp-Tyr) (with M-298) cross-link spans 125-272; the sequence is WHSAGTYRIG…LAAVQMGLIY (148 aa). Histidine 126 acts as the Proton acceptor in catalysis. The tract at residues 237–256 is disordered; it reads VHHPDEHRGAKEKAAKNSDS. The tryptophyl-tyrosyl-methioninium (Tyr-Met) (with W-125) cross-link spans 272–298; the sequence is YVNPEGPDGRPDPLASARDIRETFARM. A heme b-binding site is contributed by histidine 313. Residues 317 to 336 form a disordered region; it reads KTHGAAPADNVGPEPEAGEL.

Belongs to the peroxidase family. Peroxidase/catalase subfamily. In terms of assembly, homodimer or homotetramer. The cofactor is heme b. Post-translationally, formation of the three residue Trp-Tyr-Met cross-link is important for the catalase, but not the peroxidase activity of the enzyme.

It carries out the reaction H2O2 + AH2 = A + 2 H2O. It catalyses the reaction 2 H2O2 = O2 + 2 H2O. Functionally, bifunctional enzyme with both catalase and broad-spectrum peroxidase activity. In Xylella fastidiosa (strain 9a5c), this protein is Catalase-peroxidase.